A 217-amino-acid polypeptide reads, in one-letter code: Small ribosomal subunit protein uS3 (217 aa).

In terms of domain architecture, KH type-2 spans Ile38–Lys106.

This sequence belongs to the universal ribosomal protein uS3 family. Part of the 30S ribosomal subunit. Forms a tight complex with proteins S10 and S14.

Functionally, binds the lower part of the 30S subunit head. Binds mRNA in the 70S ribosome, positioning it for translation. This chain is Small ribosomal subunit protein uS3, found in Streptococcus sanguinis (strain SK36).